The primary structure comprises 151 residues: Superoxide dismutase [Cu-Zn] A (151 aa).

The S-palmitoyl cysteine moiety is linked to residue Cys6. Residues His45, His47, and His62 each contribute to the Cu cation site. An intrachain disulfide couples Cys56 to Cys144. Residues His62, His70, His79, and Asp82 each coordinate Zn(2+). His118 is a binding site for Cu cation.

The protein belongs to the Cu-Zn superoxide dismutase family. As to quaternary structure, homodimer, and heterodimer of Superoxide dismutase [Cu-Zn] A and B. The cofactor is Cu cation. It depends on Zn(2+) as a cofactor.

It is found in the cytoplasm. The protein resides in the nucleus. The enzyme catalyses 2 superoxide + 2 H(+) = H2O2 + O2. Its function is as follows. Destroys radicals which are normally produced within the cells and which are toxic to biological systems. The protein is Superoxide dismutase [Cu-Zn] A (sod1-a) of Xenopus laevis (African clawed frog).